Here is a 493-residue protein sequence, read N- to C-terminus: Probable cytosol aminopeptidase (493 aa).

K256 and D261 together coordinate Mn(2+). K268 is an active-site residue. Positions 279, 338, and 340 each coordinate Mn(2+). R342 is an active-site residue.

Belongs to the peptidase M17 family. Mn(2+) is required as a cofactor.

The protein localises to the cytoplasm. The catalysed reaction is Release of an N-terminal amino acid, Xaa-|-Yaa-, in which Xaa is preferably Leu, but may be other amino acids including Pro although not Arg or Lys, and Yaa may be Pro. Amino acid amides and methyl esters are also readily hydrolyzed, but rates on arylamides are exceedingly low.. It catalyses the reaction Release of an N-terminal amino acid, preferentially leucine, but not glutamic or aspartic acids.. Functionally, presumably involved in the processing and regular turnover of intracellular proteins. Catalyzes the removal of unsubstituted N-terminal amino acids from various peptides. The polypeptide is Probable cytosol aminopeptidase (Phytoplasma australiense).